A 255-amino-acid chain; its full sequence is MATIKEVKEQLAILRDLDDPRWASFEEDSRTGVQAAIRKRRKAILAELAEEERLETLLNYEKSLYARGIELIAGVDEVGRGPLAGPVVAAAVILPKLCKIKGLNDSKKIPKSKHEAIYNQVMKEAVAVGIGIKDNYVIDDVNIYEATKLAMIEAIEKLNPQPEHLLIDAMNLDLPIEQTSIIKGDANSLSIAAASIVAKVTRDKMMADYEQEFPGYAFAKNAGYGTKEHLSGIDKFGVTPIHRRSFEPIKSIIKK.

Residues 70 to 255 (ELIAGVDEVG…FEPIKSIIKK (186 aa)) form the RNase H type-2 domain. A divalent metal cation-binding residues include Asp-76, Glu-77, and Asp-168.

This sequence belongs to the RNase HII family. The cofactor is Mn(2+). It depends on Mg(2+) as a cofactor.

It localises to the cytoplasm. It carries out the reaction Endonucleolytic cleavage to 5'-phosphomonoester.. Endonuclease that specifically degrades the RNA of RNA-DNA hybrids. The chain is Ribonuclease HII from Streptococcus thermophilus (strain ATCC BAA-491 / LMD-9).